A 77-amino-acid chain; its full sequence is RNA-binding protein Hfq (77 aa).

Residues Asp10 to Ile70 form the Sm domain.

It belongs to the Hfq family. In terms of assembly, homohexamer.

In terms of biological role, RNA chaperone that binds small regulatory RNA (sRNAs) and mRNAs to facilitate mRNA translational regulation in response to envelope stress, environmental stress and changes in metabolite concentrations. Also binds with high specificity to tRNAs. The polypeptide is RNA-binding protein Hfq (Clostridium botulinum (strain Eklund 17B / Type B)).